Here is a 449-residue protein sequence, read N- to C-terminus: MNKIKEGANVRITIYSPEVYTYGAMLIGGILKHKGYNVHLVRKIDKTLFLKSDVIIFSLYSTLHILDKNIREAIDFIKKVRKNKTKVYVAGCVSTYPEIILNELNVDGVIVGEGEITTPKIIEGDKEGLAYKEGDEIVINYPKEKPDLNHPLPLIPKDIEQQSIRGANVYIETHRGCLGNCTFCQVPKFFGKTIRSRDVEDVVEEVKAFKRAGAKRIAISGGTGSLYAFKKSINRDKFFELLEKVSEVIGKNNLSVPDMRVDYVDEEILEAIKNYTIGWVFYGIESGSDKILKDMKKGTNREKNLDAIKLAKDCGVKVAGSFIVAYPTETEMDYLLTKDFIVDAELDDVFVSIAEPIPTTELCDLVLSMPKEENLLYKMHEGEYRKLGLSEAEARCFDLLIHAEMWKSMPKPLTPQLYNLYLNEARIQGKDIRAITDLLFKYRDLLLKK.

The Radical SAM core domain occupies 163-390 (SIRGANVYIE…EGEYRKLGLS (228 aa)). [4Fe-4S] cluster-binding residues include Cys177, Cys181, and Cys184.

This sequence belongs to the methylthiotransferase family. [4Fe-4S] cluster serves as cofactor.

This chain is Putative methylthiotransferase MJ0865, found in Methanocaldococcus jannaschii (strain ATCC 43067 / DSM 2661 / JAL-1 / JCM 10045 / NBRC 100440) (Methanococcus jannaschii).